We begin with the raw amino-acid sequence, 258 residues long: Imidazole glycerol phosphate synthase subunit HisF (258 aa).

Catalysis depends on residues Asp-12 and Asp-131.

The protein belongs to the HisA/HisF family. In terms of assembly, heterodimer of HisH and HisF.

The protein resides in the cytoplasm. It carries out the reaction 5-[(5-phospho-1-deoxy-D-ribulos-1-ylimino)methylamino]-1-(5-phospho-beta-D-ribosyl)imidazole-4-carboxamide + L-glutamine = D-erythro-1-(imidazol-4-yl)glycerol 3-phosphate + 5-amino-1-(5-phospho-beta-D-ribosyl)imidazole-4-carboxamide + L-glutamate + H(+). It participates in amino-acid biosynthesis; L-histidine biosynthesis; L-histidine from 5-phospho-alpha-D-ribose 1-diphosphate: step 5/9. IGPS catalyzes the conversion of PRFAR and glutamine to IGP, AICAR and glutamate. The HisF subunit catalyzes the cyclization activity that produces IGP and AICAR from PRFAR using the ammonia provided by the HisH subunit. The protein is Imidazole glycerol phosphate synthase subunit HisF of Corynebacterium glutamicum (strain R).